Reading from the N-terminus, the 189-residue chain is Parkinson disease protein 7 homolog (189 aa).

Position 2 is an N-acetylalanine (Ala-2). 2 S-palmitoyl cysteine lipidation sites follow: Cys-46 and Cys-53. Tyr-67 carries the phosphotyrosine modification. Cys-106 (nucleophile) is an active-site residue. Cys-106 carries the cysteine sulfinic acid (-SO2H); alternate modification. Cys-106 carries S-palmitoyl cysteine; alternate lipidation. Residue His-126 is part of the active site. Residue Lys-130 forms a Glycyl lysine isopeptide (Lys-Gly) (interchain with G-Cter in SUMO) linkage. Lys-148 carries the N6-acetyllysine modification. Residue Lys-182 is modified to N6-succinyllysine.

This sequence belongs to the peptidase C56 family. As to quaternary structure, homodimer. Binds EFCAB6/DJBP and PIAS2. Part of a ternary complex containing PARK7, EFCAB6/DJBP and AR. Interacts (via N-terminus) with OTUD7B. Interacts with BBS1, HIPK1, CLCF1 and MTERF. Forms a complex with PINK1 and PRKN. Interacts (via C-terminus) with NCF1; the interaction is enhanced by LPS and modulates NCF1 phosphorylation and membrane translocation. Interacts with NENF. The cofactor is Deglycase activity does not require glutathione as a cofactor, however, glycated glutathione constitutes a PARK7 substrate.. Post-translationally, sumoylated on Lys-130 by PIAS2 or PIAS4; which is essential for cell-growth promoting activity and transforming activity. Undergoes cleavage of a C-terminal peptide and subsequent activation of protease activity in response to oxidative stress. Ubiquitous. Detected on epididymal sperm. Highly expressed in testis and prostate. Detected at lower levels in heart, lung, brain, liver, kidney, seminal vesicle, caput and corpus epididymis.

It is found in the cell membrane. The protein resides in the cytoplasm. It localises to the membrane raft. The protein localises to the nucleus. Its subcellular location is the mitochondrion. It is found in the endoplasmic reticulum. It catalyses the reaction N(omega)-(1-hydroxy-2-oxopropyl)-L-arginyl-[protein] + H2O = lactate + L-arginyl-[protein] + H(+). The catalysed reaction is N(6)-(1-hydroxy-2-oxopropyl)-L-lysyl-[protein] + H2O = lactate + L-lysyl-[protein] + H(+). The enzyme catalyses S-(1-hydroxy-2-oxopropyl)-L-cysteinyl-[protein] + H2O = lactate + L-cysteinyl-[protein] + H(+). It carries out the reaction N(omega)-(1-hydroxy-2-oxoethyl)-L-arginyl-[protein] + H2O = L-arginyl-[protein] + glycolate + H(+). It catalyses the reaction N(6)-(1-hydroxy-2-oxoethyl)-L-lysyl-[protein] + H2O = glycolate + L-lysyl-[protein] + H(+). The catalysed reaction is S-(1-hydroxy-2-oxoethyl)-L-cysteinyl-[protein] + H2O = glycolate + L-cysteinyl-[protein] + H(+). The enzyme catalyses N(2)-(1-hydroxy-2-oxopropyl)-dGTP + H2O = lactate + dGTP + H(+). It carries out the reaction N(2)-(1-hydroxy-2-oxopropyl)-GTP + H2O = lactate + GTP + H(+). It catalyses the reaction N(2)-(1-hydroxy-2-oxopropyl)-GDP + H2O = lactate + GDP + H(+). The catalysed reaction is N(2)-(1-hydroxy-2-oxopropyl)-GMP + H2O = lactate + GMP + H(+). The enzyme catalyses N(2)-(1-hydroxy-2-oxoethyl)-dGTP + H2O = dGTP + glycolate + H(+). It carries out the reaction N(2)-(1-hydroxy-2-oxoethyl)-GTP + H2O = glycolate + GTP + H(+). It catalyses the reaction N(2)-(1-hydroxy-2-oxoethyl)-GDP + H2O = glycolate + GDP + H(+). The catalysed reaction is N(2)-(1-hydroxy-2-oxoethyl)-GMP + H2O = glycolate + GMP + H(+). The enzyme catalyses an N(2)-(1-hydroxy-2-oxopropyl)-guanosine in RNA + H2O = a guanosine in RNA + lactate + H(+). It carries out the reaction an N(2)-(1-hydroxy-2-oxopropyl)-2'-deoxyguanosine in DNA + H2O = a 2'-deoxyguanosine in DNA + lactate + H(+). It catalyses the reaction an N(2)-(1-hydroxy-2-oxoethyl)-guanosine in RNA + H2O = a guanosine in RNA + glycolate + H(+). The catalysed reaction is an N(2)-(1-hydroxy-2-oxoethyl)-2'-deoxyguanosine in DNA + H2O = a 2'-deoxyguanosine in DNA + glycolate + H(+). Protein and nucleotide deglycase that catalyzes the deglycation of the Maillard adducts formed between amino groups of proteins or nucleotides and reactive carbonyl groups of glyoxals. Thus, functions as a protein deglycase that repairs methylglyoxal- and glyoxal-glycated proteins, and releases repaired proteins and lactate or glycolate, respectively. Deglycates cysteine, arginine and lysine residues in proteins, and thus reactivates these proteins by reversing glycation by glyoxals. Acts on early glycation intermediates (hemithioacetals and aminocarbinols), preventing the formation of advanced glycation endproducts (AGE) that cause irreversible damage. Also functions as a nucleotide deglycase able to repair glycated guanine in the free nucleotide pool (GTP, GDP, GMP, dGTP) and in DNA and RNA. Is thus involved in a major nucleotide repair system named guanine glycation repair (GG repair), dedicated to reversing methylglyoxal and glyoxal damage via nucleotide sanitization and direct nucleic acid repair. Also displays an apparent glyoxalase activity that in fact reflects its deglycase activity. Plays an important role in cell protection against oxidative stress and cell death acting as oxidative stress sensor and redox-sensitive chaperone and protease; functions probably related to its primary function. It is involved in neuroprotective mechanisms like the stabilization of NFE2L2 and PINK1 proteins, male fertility as a positive regulator of androgen signaling pathway as well as cell growth and transformation through, for instance, the modulation of NF-kappa-B signaling pathway. Eliminates hydrogen peroxide and protects cells against hydrogen peroxide-induced cell death. Required for correct mitochondrial morphology and function as well as for autophagy of dysfunctional mitochondria. Plays a role in regulating expression or stability of the mitochondrial uncoupling proteins SLC25A14 and SLC25A27 in dopaminergic neurons of the substantia nigra pars compacta and attenuates the oxidative stress induced by calcium entry into the neurons via L-type channels during pacemaking. Regulates astrocyte inflammatory responses, may modulate lipid rafts-dependent endocytosis in astrocytes and neuronal cells. In pancreatic islets, involved in the maintenance of mitochondrial reactive oxygen species (ROS) levels and glucose homeostasis in an age- and diet dependent manner. Protects pancreatic beta cells from cell death induced by inflammatory and cytotoxic setting. Binds to a number of mRNAs containing multiple copies of GG or CC motifs and partially inhibits their translation but dissociates following oxidative stress. Metal-binding protein able to bind copper as well as toxic mercury ions, enhances the cell protection mechanism against induced metal toxicity. In macrophages, interacts with the NADPH oxidase subunit NCF1 to direct NADPH oxidase-dependent ROS production, and protects against sepsis. This is Parkinson disease protein 7 homolog from Rattus norvegicus (Rat).